Reading from the N-terminus, the 310-residue chain is MNMHVDMGRALTVRDWPALEALAKTMPADAGARAMTDDDLRAAGVDRRVPEQKLGAAIDEFASLRLPDRIDGRFVDGRRANLTVFDDARVAVRGHARAQRNLLERLETELLGGTLDTAGDEGGIQPDPILQGLVDVIGQGKSDIDAYATIVEGLTKYFQSVADVMSKLQDYISAKDDKNMKIDGGKIKALIQQVIDHLPTMQLPKGADIARWRKELGDAVSISDSGVVTINPDKLIKMRDSLPPDGTVWDTARYQAWNTAFSGQKDNIQNDVQTLVEKYSHQNSNFDNLVKVLSGAISTLTDTAKSYLQI.

Coiled coils occupy residues 127-171 and 250-299; these read DPIL…LQDY and DTAR…AIST.

This sequence belongs to the invasin protein D family.

It is found in the secreted. Required for invasion of epithelial cells, as well as for survival within host cells, escape from endocytic vesicles and subsequent actin-tail formation. Probably regulates the secretion of effectors BipB and BipC and their final integration into the target cell membrane. This chain is Translocator protein BipD (bipD), found in Burkholderia mallei (strain NCTC 10247).